A 297-amino-acid polypeptide reads, in one-letter code: NADPH-dependent 1-acyldihydroxyacetone phosphate reductase (297 aa).

A GXSXG motif is present at residues 16-20 (GASGG). The active-site Nucleophile; for lipase activity is the serine 18. 8 residues coordinate NADP(+): isoleucine 21, aspartate 64, asparagine 93, arginine 126, tyrosine 157, lysine 161, valine 190, and threonine 192. Tyrosine 157 functions as the Proton acceptor in the catalytic mechanism. Lysine 161 acts as the Lowers pKa of active site Tyr in catalysis.

This sequence belongs to the short-chain dehydrogenases/reductases (SDR) family.

It is found in the lipid droplet. The protein localises to the mitochondrion outer membrane. It localises to the endoplasmic reticulum. It carries out the reaction a 1-acylglycerone 3-phosphate + NADPH + H(+) = a 1-acyl-sn-glycero-3-phosphate + NADP(+). The catalysed reaction is 1-hexadecanoyl-sn-glycero-3-phosphate + NADP(+) = 1-hexadecanoylglycerone 3-phosphate + NADPH + H(+). The enzyme catalyses a triacylglycerol + H2O = a diacylglycerol + a fatty acid + H(+). It catalyses the reaction 1,2,3-tri-(9Z-octadecenoyl)-glycerol + H2O = di-(9Z)-octadecenoylglycerol + (9Z)-octadecenoate + H(+). Its activity is regulated as follows. Inhibited by divalent cations and N-ethylmaleimide. Activity is reduced under anaerobic growth conditions. In terms of biological role, can convert acyl and alkyl dihydroxyacetone-phosphate (DHAP) into glycerolipids and ether lipids, respectively. Required for the biosynthesis of phosphatidic acid via the DHAP pathway, where it reduces 1-acyl DHAP to lysophosphatidic acid (LPA). Also has triacylglycerol (TAG) lipase activity. Involved in the mobilization of the non-polar storage lipids triacylglycerols (TAGs) from lipid particles by hydrolysis of TAGs. Required for spore germination. Plays a role in cell wall biogenesis, but this effect may be indirect by affecting the activities of cell wall synthesis enzymes. Lipolysis of TAG by AYR1 is essential for starvation-induced autophagy. Forms an NADPH-regulated cation-selective channel in the mitochondrial outer membrane. The sequence is that of NADPH-dependent 1-acyldihydroxyacetone phosphate reductase from Saccharomyces cerevisiae (strain ATCC 204508 / S288c) (Baker's yeast).